A 90-amino-acid polypeptide reads, in one-letter code: Small ribosomal subunit protein bS16 (90 aa).

This sequence belongs to the bacterial ribosomal protein bS16 family.

This chain is Small ribosomal subunit protein bS16, found in Bacillus velezensis (strain DSM 23117 / BGSC 10A6 / LMG 26770 / FZB42) (Bacillus amyloliquefaciens subsp. plantarum).